A 159-amino-acid polypeptide reads, in one-letter code: 2-C-methyl-D-erythritol 2,4-cyclodiphosphate synthase (159 aa).

Asp-8 and His-10 together coordinate a divalent metal cation. 4-CDP-2-C-methyl-D-erythritol 2-phosphate-binding positions include 8–10 (DVH) and 34–35 (HS). His-42 is an a divalent metal cation binding site. 4-CDP-2-C-methyl-D-erythritol 2-phosphate is bound by residues 56–58 (DIG), 61–65 (FPDTD), 100–106 (AQAPKMA), 132–135 (TTSE), Phe-139, and Arg-142.

The protein belongs to the IspF family. In terms of assembly, homotrimer. A divalent metal cation is required as a cofactor.

The enzyme catalyses 4-CDP-2-C-methyl-D-erythritol 2-phosphate = 2-C-methyl-D-erythritol 2,4-cyclic diphosphate + CMP. It participates in isoprenoid biosynthesis; isopentenyl diphosphate biosynthesis via DXP pathway; isopentenyl diphosphate from 1-deoxy-D-xylulose 5-phosphate: step 4/6. In terms of biological role, involved in the biosynthesis of isopentenyl diphosphate (IPP) and dimethylallyl diphosphate (DMAPP), two major building blocks of isoprenoid compounds. Catalyzes the conversion of 4-diphosphocytidyl-2-C-methyl-D-erythritol 2-phosphate (CDP-ME2P) to 2-C-methyl-D-erythritol 2,4-cyclodiphosphate (ME-CPP) with a corresponding release of cytidine 5-monophosphate (CMP). This Aliivibrio salmonicida (strain LFI1238) (Vibrio salmonicida (strain LFI1238)) protein is 2-C-methyl-D-erythritol 2,4-cyclodiphosphate synthase.